The chain runs to 1045 residues: Protein transport protein Sec16B (1045 aa).

The span at 1-13 (MEPWVPQWPPPSR) shows a compositional bias: pro residues. A disordered region spans residues 1–78 (MEPWVPQWPP…PQHVPRLGAW (78 aa)). The segment covering 22–33 (DSERGLQRDGYH) has biased composition (basic and acidic residues). Residues 50–60 (QDVQGSPQPQQ) are compositionally biased toward polar residues. 2 positions are modified to phosphoserine: serine 55 and serine 137. The span at 149–168 (RHLSEHRPENQSRTFRRDSE) shows a compositional bias: basic and acidic residues. 4 disordered regions span residues 149-193 (RHLS…QERP), 707-733 (QQKA…TTES), 748-789 (APGC…YSVP), and 813-1045 (QTHS…TQPC). Serine 186 bears the Phosphoserine mark. The central conserved domain (CCD); required for localization to endoplasmic reticulum exit sites stretch occupies residues 267–711 (APKKFYIPHV…RHQELQQKAA (445 aa)). Residues 773–784 (GPAAGPAGAPVP) are compositionally biased toward low complexity. 4 positions are modified to phosphoserine: serine 852, serine 858, serine 866, and serine 867. Residues 916 to 926 (EDSSDSPDSEQ) show a composition bias toward acidic residues. A compositionally biased stretch (pro residues) spans 942–953 (SPPPLLESPPLP). A compositionally biased stretch (gly residues) spans 957 to 966 (AFGGGTGRGE). Polar residues predominate over residues 989–998 (ESASSELYSN).

The protein belongs to the SEC16 family. SEC16A and SEC16B are each present in multiple copies in a heteromeric complex. Interacts with TFG. Interacts with SEC13. In terms of tissue distribution, liver.

The protein localises to the endoplasmic reticulum membrane. It is found in the golgi apparatus membrane. Plays a role in the organization of the endoplasmic reticulum exit sites (ERES), also known as transitional endoplasmic reticulum (tER). Required for secretory cargo traffic from the endoplasmic reticulum to the Golgi apparatus. Involved in peroxisome biogenesis. Regulates the transport of peroxisomal biogenesis factors PEX3 and PEX16 from the ER to peroxisomes. This is Protein transport protein Sec16B (SEC16B) from Oryctolagus cuniculus (Rabbit).